We begin with the raw amino-acid sequence, 214 residues long: GTP cyclohydrolase 1 (214 aa).

Zn(2+)-binding residues include Cys108, His111, and Cys179.

It belongs to the GTP cyclohydrolase I family. As to quaternary structure, toroid-shaped homodecamer, composed of two pentamers of five dimers.

It catalyses the reaction GTP + H2O = 7,8-dihydroneopterin 3'-triphosphate + formate + H(+). Its pathway is cofactor biosynthesis; 7,8-dihydroneopterin triphosphate biosynthesis; 7,8-dihydroneopterin triphosphate from GTP: step 1/1. The sequence is that of GTP cyclohydrolase 1 from Shewanella loihica (strain ATCC BAA-1088 / PV-4).